The primary structure comprises 290 residues: Putative heme oxygenase 3 (290 aa).

A compositionally biased stretch (acidic residues) spans 1–12; the sequence is MSSEVETAEAVD. The interval 1–33 is disordered; that stretch reads MSSEVETAEAVDESEKNSMASEKENHSKIADFS. Residues 13-33 show a composition bias toward basic and acidic residues; it reads ESEKNSMASEKENHSKIADFS. HRM repeat units follow at residues 238-243 and 255-260; these read KCPFNA and NCPFQM.

The protein belongs to the heme oxygenase family. As to expression, found in the spleen, liver, thymus, prostate, heart, kidney, brain and testis.

It carries out the reaction heme b + 3 reduced [NADPH--hemoprotein reductase] + 3 O2 = biliverdin IXalpha + CO + Fe(2+) + 3 oxidized [NADPH--hemoprotein reductase] + 3 H2O + H(+). Its function is as follows. Heme oxygenase cleaves the heme ring at the alpha methene bridge to form biliverdin. Biliverdin is subsequently converted to bilirubin by biliverdin reductase. Heme oxygenase 3 could be implicated in some heme-dependent regulatory role in the cell. In Rattus norvegicus (Rat), this protein is Putative heme oxygenase 3 (Hmox3).